A 221-amino-acid chain; its full sequence is Urease accessory protein UreF (221 aa).

Belongs to the UreF family. UreD, UreF and UreG form a complex that acts as a GTP-hydrolysis-dependent molecular chaperone, activating the urease apoprotein by helping to assemble the nickel containing metallocenter of UreC. The UreE protein probably delivers the nickel.

Its subcellular location is the cytoplasm. Functionally, required for maturation of urease via the functional incorporation of the urease nickel metallocenter. This chain is Urease accessory protein UreF, found in Microcystis aeruginosa (strain NIES-843 / IAM M-2473).